Consider the following 271-residue polypeptide: Small ribosomal subunit protein uS2 (271 aa).

The interval 223-271 (RALAGSEEGEATEEVTPASEAEKQEVLAEAMSEEGDALQESEVVEEEEK) is disordered. The span at 253-271 (MSEEGDALQESEVVEEEEK) shows a compositional bias: acidic residues.

It belongs to the universal ribosomal protein uS2 family.

This Wolinella succinogenes (strain ATCC 29543 / DSM 1740 / CCUG 13145 / JCM 31913 / LMG 7466 / NCTC 11488 / FDC 602W) (Vibrio succinogenes) protein is Small ribosomal subunit protein uS2.